Consider the following 232-residue polypeptide: Chaperone protein CssC (232 aa).

Positions 1 to 20 (MKSKLIILLTLVPFSSFSTG) are cleaved as a signal peptide.

This sequence belongs to the periplasmic pilus chaperone family.

It is found in the periplasm. Its function is as follows. Involved in the biogenesis of the CS6 fimbria. In Escherichia coli, this protein is Chaperone protein CssC (cssC).